A 426-amino-acid chain; its full sequence is C2H2 type master regulator of conidiophore development brlA (426 aa).

Disordered regions lie at residues 25-71 and 281-302; these read CPSM…DRGT and GVRL…KQSL. Residues 30-44 show a composition bias toward low complexity; that stretch reads SSFSPLESPTPTPTS. The span at 45–58 shows a compositional bias: polar residues; sequence IYSQGSLASPSWPE. Over residues 288–297 the composition is skewed to basic residues; that stretch reads PSRKMARKQP. 2 consecutive C2H2-type zinc fingers follow at residues 316–340 and 346–371; these read FKCK…MKSH and HVCW…TKTH. The interval 384-426 is disordered; that stretch reads LDETSPDYNPDYRGPLTADGRPMPGGTLDESMPSREISMEWDE.

It is found in the nucleus. BrlA, abaA and wetA are pivotal regulators of conidiophore development and conidium maturation. They act individually and together to regulate their own expression and that of numerous other sporulation-specific genes. Binds promoters of target genes at brlA response elements (BREs) containing the conserved sequence 5'-(C/A)(A/G)AGGG(G/A)-3'. Positively regulates expression of the gliotoxin biosynthetic gene cluster in actively growing vegetative cells, and likely bridges morphological and chemical development during the life-cycle. Regulates (directly or indirectly) the ergot cluster genes. Positively regulates expression of the fumiquinazoline C biosynthetic gene cluster. Positively regulates expression of the melanin biosynthetic gene cluster. Mediates repression of ribosomal protein gene expression in response to nitrogen depletion. The sequence is that of C2H2 type master regulator of conidiophore development brlA from Aspergillus fumigatus (strain ATCC MYA-4609 / CBS 101355 / FGSC A1100 / Af293) (Neosartorya fumigata).